The primary structure comprises 218 residues: Cold-regulated protein 28 (218 aa).

Disordered regions lie at residues 1 to 51 (MEND…ADSK) and 166 to 218 (TKHS…KPRT). Residues 20-37 (EASAESQSESTLSNSLDS) show a composition bias toward low complexity. Over residues 186–207 (GEVSKKREREANNDDSSLKEDQ) the composition is skewed to basic and acidic residues.

It is found in the nucleus. In terms of biological role, together with COR27, involved in central circadian clock regulation and in flowering promotion, by binding to the chromatin of clock-associated evening genes TOC1, PRR5, ELF4 and cold-responsive genes in order to repress their transcription. Negative regulator of freezing tolerance. The sequence is that of Cold-regulated protein 28 from Arabidopsis thaliana (Mouse-ear cress).